The following is a 944-amino-acid chain: Weak acid resistance protein 1 (944 aa).

The zn(2)-C6 fungal-type DNA-binding region spans 76–109; the sequence is CVCCHSLKQKCEPSDVNDIYRKPCRRCLKHKKLC. 2 disordered regions span residues 114 to 171 and 197 to 225; these read SKRT…AKQF and SYGA…SVPT. T128 carries the post-translational modification Phosphothreonine. 2 stretches are compositionally biased toward polar residues: residues 135-144 and 205-225; these read VNVSTKSKGP and TTST…SVPT.

Homodimer. Post-translationally, phosphorylation is required for PDR12 induction.

The protein resides in the nucleus. In terms of biological role, transcription factor which binds to a weak acid response element (WARE) to mediate stress induction of PDR12 and FUN34, encoding an acid transporter and a putative ammonia transporter, respectively. The protein is Weak acid resistance protein 1 (WAR1) of Saccharomyces cerevisiae (strain ATCC 204508 / S288c) (Baker's yeast).